Here is a 510-residue protein sequence, read N- to C-terminus: NAD(P)H-quinone oxidoreductase subunit 2 B, chloroplastic (510 aa).

13 consecutive transmembrane segments (helical) span residues 24-44, 57-77, 99-119, 124-144, 149-169, 183-203, 227-247, 295-315, 323-343, 354-374, 395-415, 418-438, and 484-504; these read LLFF…GLIL, IPWL…ALLF, IFQF…VEYI, MAIT…MFLC, LITI…LSGY, YLLM…WLYG, PGIS…LSPA, WHLL…LIAI, MLAY…IVGD, YMLF…LFGL, ALSL…AGFF, LYLF…IGLL, and MIVC…IIAI.

Belongs to the complex I subunit 2 family. NDH is composed of at least 16 different subunits, 5 of which are encoded in the nucleus.

The protein resides in the plastid. Its subcellular location is the chloroplast thylakoid membrane. It catalyses the reaction a plastoquinone + NADH + (n+1) H(+)(in) = a plastoquinol + NAD(+) + n H(+)(out). The enzyme catalyses a plastoquinone + NADPH + (n+1) H(+)(in) = a plastoquinol + NADP(+) + n H(+)(out). Functionally, NDH shuttles electrons from NAD(P)H:plastoquinone, via FMN and iron-sulfur (Fe-S) centers, to quinones in the photosynthetic chain and possibly in a chloroplast respiratory chain. The immediate electron acceptor for the enzyme in this species is believed to be plastoquinone. Couples the redox reaction to proton translocation, and thus conserves the redox energy in a proton gradient. In Guizotia abyssinica (Niger), this protein is NAD(P)H-quinone oxidoreductase subunit 2 B, chloroplastic.